Consider the following 63-residue polypeptide: Large ribosomal subunit protein bL32 (63 aa).

Residues 1-18 are compositionally biased toward basic residues; the sequence is MPVPKRKTSPSRRGKRRS. The tract at residues 1–26 is disordered; that stretch reads MPVPKRKTSPSRRGKRRSHDGLRPEN.

The protein belongs to the bacterial ribosomal protein bL32 family.

The chain is Large ribosomal subunit protein bL32 from Neorickettsia sennetsu (strain ATCC VR-367 / Miyayama) (Ehrlichia sennetsu).